The primary structure comprises 2662 residues: Centrosome-associated protein CEP250L1 (2662 aa).

Coiled-coil stretches lie at residues 1030–1248 (KVHY…EEEE) and 1281–1719 (ARTH…IDAQ).

The protein resides in the cytoplasm. The protein localises to the cytoskeleton. It is found in the microtubule organizing center. Its subcellular location is the centrosome. In terms of biological role, part of the centrosome inner core complex. Plays a role in the formation and/or stabilization of the mitotic spindle. Required for proper nuclear segregation and DNA partitioning during cell division. The chain is Centrosome-associated protein CEP250L1 from Toxoplasma gondii (strain ATCC 50611 / Me49).